Reading from the N-terminus, the 39-residue chain is Photosystem II reaction center protein L (39 aa).

Residues 18–38 traverse the membrane as a helical segment; it reads SLYLGLLFVFVTGVLMSSYFF.

The protein belongs to the PsbL family. As to quaternary structure, PSII is composed of 1 copy each of membrane proteins PsbA, PsbB, PsbC, PsbD, PsbE, PsbF, PsbH, PsbI, PsbJ, PsbK, PsbL, PsbM, PsbT, PsbX, PsbY, PsbZ, Psb30/Ycf12, peripheral proteins PsbO, CyanoQ (PsbQ), PsbU, PsbV and a large number of cofactors. It forms dimeric complexes.

It localises to the cellular thylakoid membrane. Functionally, one of the components of the core complex of photosystem II (PSII). PSII is a light-driven water:plastoquinone oxidoreductase that uses light energy to abstract electrons from H(2)O, generating O(2) and a proton gradient subsequently used for ATP formation. It consists of a core antenna complex that captures photons, and an electron transfer chain that converts photonic excitation into a charge separation. This subunit is found at the monomer-monomer interface and is required for correct PSII assembly and/or dimerization. In Synechococcus sp. (strain CC9902), this protein is Photosystem II reaction center protein L.